An 872-amino-acid polypeptide reads, in one-letter code: Alanine--tRNA ligase (872 aa).

Positions 567, 571, 669, and 673 each coordinate Zn(2+).

This sequence belongs to the class-II aminoacyl-tRNA synthetase family. Zn(2+) is required as a cofactor.

It localises to the cytoplasm. The catalysed reaction is tRNA(Ala) + L-alanine + ATP = L-alanyl-tRNA(Ala) + AMP + diphosphate. In terms of biological role, catalyzes the attachment of alanine to tRNA(Ala) in a two-step reaction: alanine is first activated by ATP to form Ala-AMP and then transferred to the acceptor end of tRNA(Ala). Also edits incorrectly charged Ser-tRNA(Ala) and Gly-tRNA(Ala) via its editing domain. The chain is Alanine--tRNA ligase from Streptococcus gordonii (strain Challis / ATCC 35105 / BCRC 15272 / CH1 / DL1 / V288).